We begin with the raw amino-acid sequence, 618 residues long: DNA mismatch repair protein MutL (618 aa).

The protein belongs to the DNA mismatch repair MutL/HexB family.

In terms of biological role, this protein is involved in the repair of mismatches in DNA. It is required for dam-dependent methyl-directed DNA mismatch repair. May act as a 'molecular matchmaker', a protein that promotes the formation of a stable complex between two or more DNA-binding proteins in an ATP-dependent manner without itself being part of a final effector complex. This is DNA mismatch repair protein MutL from Porphyromonas gingivalis (strain ATCC BAA-308 / W83).